A 307-amino-acid polypeptide reads, in one-letter code: N-acetylmuramic acid 6-phosphate etherase (307 aa).

In terms of domain architecture, SIS spans 59-222 (TADRLRQGGR…STGVMVKLGK (164 aa)). Glu87 functions as the Proton donor in the catalytic mechanism. The active site involves Glu118.

Belongs to the GCKR-like family. MurNAc-6-P etherase subfamily. Homodimer.

It catalyses the reaction N-acetyl-D-muramate 6-phosphate + H2O = N-acetyl-D-glucosamine 6-phosphate + (R)-lactate. The protein operates within amino-sugar metabolism; N-acetylmuramate degradation. Functionally, specifically catalyzes the cleavage of the D-lactyl ether substituent of MurNAc 6-phosphate, producing GlcNAc 6-phosphate and D-lactate. This is N-acetylmuramic acid 6-phosphate etherase from Trichormus variabilis (strain ATCC 29413 / PCC 7937) (Anabaena variabilis).